Here is a 444-residue protein sequence, read N- to C-terminus: MNFFTSAVGSKVFKRNNFKYVAIAASSIGLAAYHIRKDAIALDIPNSTYQHVSKNRVPPTDGDGITKRLKEFERTVTVNKDGIFRYDFNQVASNDPCEDDHVEVIDRNIDEGNWYFWGIFDGHSGWNTSLFLRQHLVPAVVRELQKCTASYYHQNACPSSLALDKSISEAFAKVDHQIVHEHVSHVFNNPESLQVAASLLLPALSGSCALLTSYSAKSKSLQVACTGDSRAVLGECTPDGSWEAIPLSRDQTGMNPDEASRLEVEHPGEEVLRNNRILGRLMPSRAFGDARYKWSQEISERLHREYFSASPIPVKTPPYVTAVPEIESITVNPKKHRFLIMASDGLWDTMSSEQAVQLVGEWADTVLGKTTNEKNTTQDDKQSWSLFKKTSKVIDDNAATHLIRHSLGGSDQRISALLTLTYPISRRYRDDITVTVIFFDEKTL.

Residues 85 to 439 enclose the PPM-type phosphatase domain; that stretch reads RYDFNQVASN…DDITVTVIFF (355 aa). Mn(2+) contacts are provided by D121, G122, and D344.

Belongs to the PP2C family. Mg(2+) serves as cofactor. The cofactor is Mn(2+).

Its subcellular location is the mitochondrion. The enzyme catalyses O-phospho-L-seryl-[protein] + H2O = L-seryl-[protein] + phosphate. It carries out the reaction O-phospho-L-threonyl-[protein] + H2O = L-threonyl-[protein] + phosphate. Functionally, involved in regulation of pyruvate dehydrogenase activity. This is Protein phosphatase 2C homolog C10F6.17c from Schizosaccharomyces pombe (strain 972 / ATCC 24843) (Fission yeast).